The sequence spans 400 residues: Large envelope protein (400 aa).

At Met1 the chain carries N-acetylmethionine. The N-myristoyl glycine; by host moiety is linked to residue Gly2. The pre-S1 stretch occupies residues 2-119; it reads GAPLSTARRG…PPLRDTHPQA (118 aa). Residues 2–174 are pre-S; the sequence is GAPLSTARRG…FSKTGDPAMN (173 aa). Residues 2-181 are Virion surface; in external conformation-facing; sequence GAPLSTARRG…AMNMENITSG (180 aa). Residues 2-253 are Intravirion; in internal conformation-facing; that stretch reads GAPLSTARRG…PGYRWMCLRR (252 aa). An N-linked (GlcNAc...) asparagine glycan is attached at Pro4. The segment at 70–115 is disordered; it reads PHGGLLGWSPQAQGILTTSPPDPPPASTNRRSGRKPTPVSPPLRDT. Polar residues predominate over residues 79-88; that stretch reads PQAQGILTTS. Residues 120–174 form a pre-S2 region; it reads MQWNSTQFHQALLDPRVRGLYFPAGGSSSETQNPVPTIASLTSSIFSKTGDPAMN. A helical membrane pass occupies residues 182–202; the sequence is LLGPLLVLQAVCFLLTKILTI. Over 203–253 the chain is Intravirion; in external conformation; the sequence is PQSLDSWWTSLNFLGVPPGCPGQNSQSPISNHLPTSCPPTCPGYRWMCLRR. The chain crosses the membrane as a helical span at residues 254 to 274; sequence FIIFLFILLLCLIFLLVLLDY. The Virion surface portion of the chain corresponds to 275–348; sequence QGMLPVCPLL…WASARFSWLS (74 aa). Asn320 carries N-linked (GlcNAc...) asparagine; by host glycosylation. Residues 349-369 form a helical membrane-spanning segment; the sequence is LLVQFVQWCVGLSPTVWLLVI. Topologically, residues 370 to 375 are intravirion; it reads WMIWYW. A helical transmembrane segment spans residues 376 to 398; that stretch reads GPNLCSILSPFIPLLPIFCYLWA. Residues 399–400 are Virion surface-facing; it reads SI.

Belongs to the orthohepadnavirus major surface antigen family. In terms of assembly, in its internal form (Li-HBsAg), interacts with the capsid protein and with the isoform S. Interacts with host chaperone CANX. As to quaternary structure, associates with host chaperone CANX through its pre-S2 N glycan; this association may be essential for isoform M proper secretion. Interacts with isoform L. Interacts with the antigens of satellite virus HDV (HDVAgs); this interaction is required for encapsidation of HDV genomic RNA. Post-translationally, isoform M is N-terminally acetylated by host at a ratio of 90%, and N-glycosylated by host at the pre-S2 region. Myristoylated.

The protein localises to the virion membrane. The large envelope protein exists in two topological conformations, one which is termed 'external' or Le-HBsAg and the other 'internal' or Li-HBsAg. In its external conformation the protein attaches the virus to cell receptors and thereby initiating infection. This interaction determines the species specificity and liver tropism. This attachment induces virion internalization predominantly through caveolin-mediated endocytosis. The large envelope protein also assures fusion between virion membrane and endosomal membrane. In its internal conformation the protein plays a role in virion morphogenesis and mediates the contact with the nucleocapsid like a matrix protein. Functionally, the middle envelope protein plays an important role in the budding of the virion. It is involved in the induction of budding in a nucleocapsid independent way. In this process the majority of envelope proteins bud to form subviral lipoprotein particles of 22 nm of diameter that do not contain a nucleocapsid. This Homo sapiens (Human) protein is Large envelope protein.